Reading from the N-terminus, the 395-residue chain is N5-carboxyaminoimidazole ribonucleotide synthase (395 aa).

ATP is bound by residues lysine 109, lysine 149, 184–187 (EEFI), glutamate 192, and 268–269 (NE). In terms of domain architecture, ATP-grasp spans 113-298 (RQLLTRLGLP…QFEQQLRAIA (186 aa)).

It belongs to the PurK/PurT family. Homodimer.

The catalysed reaction is 5-amino-1-(5-phospho-beta-D-ribosyl)imidazole + hydrogencarbonate + ATP = 5-carboxyamino-1-(5-phospho-D-ribosyl)imidazole + ADP + phosphate + 2 H(+). It functions in the pathway purine metabolism; IMP biosynthesis via de novo pathway; 5-amino-1-(5-phospho-D-ribosyl)imidazole-4-carboxylate from 5-amino-1-(5-phospho-D-ribosyl)imidazole (N5-CAIR route): step 1/2. Catalyzes the ATP-dependent conversion of 5-aminoimidazole ribonucleotide (AIR) and HCO(3)(-) to N5-carboxyaminoimidazole ribonucleotide (N5-CAIR). The chain is N5-carboxyaminoimidazole ribonucleotide synthase from Synechococcus elongatus (strain ATCC 33912 / PCC 7942 / FACHB-805) (Anacystis nidulans R2).